The following is a 104-amino-acid chain: AVIToxin-VAR2 (104 aa).

The first 19 residues, 1–19 (MRSLLCAPLLLLLLSAGES), serve as a signal peptide directing secretion. Disulfide bonds link cysteine 26–cysteine 38, cysteine 32–cysteine 50, cysteine 37–cysteine 78, cysteine 60–cysteine 86, and cysteine 80–cysteine 96.

This sequence belongs to the AVIT (prokineticin) family. As to expression, expressed by the venom gland.

The protein localises to the secreted. In terms of biological role, potent agonist for both PKR1/PROKR1 and PKR2/PROKR2. Potently contracts gastrointestinal (GI) smooth muscle. This Varanus varius (Lace monitor lizard) protein is AVIToxin-VAR2.